The primary structure comprises 62 residues: Teretoxin Tsu1.1 (62 aa).

The signal sequence occupies residues Met1 to Phe21. The propeptide occupies Pro22–Arg40.

It belongs to the teretoxin A (TA) superfamily. Post-translationally, contains 2 disulfide bonds. Expressed by the venom duct.

The protein resides in the secreted. The protein is Teretoxin Tsu1.1 of Terebra subulata (Chocolate spotted auger).